Consider the following 445-residue polypeptide: Ubiquitin carboxyl-terminal hydrolase 11 (445 aa).

The 412-residue stretch at 1–412 folds into the USP domain; that stretch reads NSARADLCVA…AAYVLFYQRQ (412 aa). Positions 127–194 are disordered; it reads RPSSDDEDDG…GPSHWPQRAR (68 aa). Serine 130 carries the phosphoserine modification. The span at 131 to 140 shows a compositional bias: acidic residues; it reads DDEDDGDEKD. Catalysis depends on histidine 362, which acts as the Nucleophile. Residue histidine 370 is the Proton acceptor of the active site. The disordered stretch occupies residues 416 to 445; the sequence is RRLQPQPSSSDPPASPACGSPPNSEFMDVN. Residues 420-439 are compositionally biased toward low complexity; that stretch reads PQPSSSDPPASPACGSPPNS. At serine 430 the chain carries Phosphoserine.

The protein belongs to the peptidase C19 family. In terms of assembly, monomer. Interacts with RANBP9/RANBPM. Interacts with BRCA2. Interacts with CHUK/IKKA. Interacts with NFKBIA. Associated component of the Polycomb group (PcG) multiprotein PRC1-like complex.

The protein localises to the nucleus. The protein resides in the cytoplasm. It localises to the chromosome. The enzyme catalyses Thiol-dependent hydrolysis of ester, thioester, amide, peptide and isopeptide bonds formed by the C-terminal Gly of ubiquitin (a 76-residue protein attached to proteins as an intracellular targeting signal).. In terms of biological role, protease that can remove conjugated ubiquitin from target proteins and polyubiquitin chains. Inhibits the degradation of target proteins by the proteasome. Cleaves preferentially 'Lys-6' and 'Lys-63'-linked ubiquitin chains. Has lower activity with 'Lys-11' and 'Lys-33'-linked ubiquitin chains, and extremely low activity with 'Lys-27', 'Lys-29' and 'Lys-48'-linked ubiquitin chains (in vitro). Plays a role in the regulation of pathways leading to NF-kappa-B activation. Plays a role in the regulation of DNA repair after double-stranded DNA breaks. Acts as a chromatin regulator via its association with the Polycomb group (PcG) multiprotein PRC1-like complex; may act by deubiquitinating components of the PRC1-like complex. Promotes cell proliferation by deubiquitinating phosphorylated E2F1. The sequence is that of Ubiquitin carboxyl-terminal hydrolase 11 (USP11) from Canis lupus familiaris (Dog).